Reading from the N-terminus, the 225-residue chain is MQFLNMFFFDIYPYIAGAVFLIGSWLRYDYGQYTWRAASSQMLDRKGMNLASNLFHIGILGIFVGHFFGMLTPHWMYEAWLPIEVKQKMAMFAGGASGVLCLIGGVLLLKRRLFSPRVRATTTGADILILSLLVIQCALGLLTIPFSAQHMDGSEMMKLVGWAQSVVTFHGGASQHLDGVAFIFRLHLVLGMTLFLLFPFSRLIHIWSVPVEYLTRKYQLVRARH.

N-formylmethionine is present on Met-1. Residues 1 to 3 lie on the Periplasmic side of the membrane; the sequence is MQF. The chain crosses the membrane as a helical span at residues 4 to 29; the sequence is LNMFFFDIYPYIAGAVFLIGSWLRYD. Residues 30–47 are Cytoplasmic-facing; sequence YGQYTWRAASSQMLDRKG. A helical membrane pass occupies residues 48-70; it reads MNLASNLFHIGILGIFVGHFFGM. Heme b contacts are provided by His-56 and His-66. Over 71–82 the chain is Periplasmic; that stretch reads LTPHWMYEAWLP. The helical transmembrane segment at 83 to 112 threads the bilayer; it reads IEVKQKMAMFAGGASGVLCLIGGVLLLKRR. The Cytoplasmic portion of the chain corresponds to 113-124; sequence LFSPRVRATTTG. The helical transmembrane segment at 125 to 148 threads the bilayer; sequence ADILILSLLVIQCALGLLTIPFSA. Residues 149 to 182 lie on the Periplasmic side of the membrane; sequence QHMDGSEMMKLVGWAQSVVTFHGGASQHLDGVAF. A helical transmembrane segment spans residues 183–198; sequence IFRLHLVLGMTLFLLF. Residues His-187 and His-205 each coordinate heme b. Residues 199-225 lie on the Cytoplasmic side of the membrane; the sequence is PFSRLIHIWSVPVEYLTRKYQLVRARH.

In terms of assembly, dimer of heterotrimers each composed of an alpha, a beta and a gamma chain. Alpha and beta are catalytic chains; gamma chains are involved in binding the enzyme complex to the cytoplasmic membrane. The cofactor is heme.

Its subcellular location is the cell inner membrane. The enzyme catalyses nitrate + a quinol = a quinone + nitrite + H2O. Functionally, the nitrate reductase enzyme complex allows E.coli to use nitrate as an electron acceptor during anaerobic growth. The gamma chain is a membrane-embedded heme-iron unit resembling cytochrome b, which transfers electrons from quinones to the beta subunit. This is Respiratory nitrate reductase 1 gamma chain (narI) from Escherichia coli (strain K12).